We begin with the raw amino-acid sequence, 54 residues long: Photoreceptor disk component PRCD (54 aa).

Cysteine 2 is lipidated: S-palmitoyl cysteine. A disordered region spans residues 25-54; sequence PEPSDVDGAARGSSLDADPQSSGREKEPLK.

The protein belongs to the PRCD family. Interacts with RHO/rhodopsin; the interaction promotes PRCD stability. In terms of processing, palmitoylated at Cys-2. Palmitoylation is essential for protein stability and trafficking to the photoreceptor outer segment, but does not appear to be essential for membrane localization. Probably palmitoylated by ZDHHC3. Post-translationally, phosphorylated.

The protein localises to the cell projection. It is found in the cilium. Its subcellular location is the photoreceptor outer segment. It localises to the membrane. The protein resides in the endoplasmic reticulum. The protein localises to the golgi apparatus. Functionally, involved in vision. This Homo sapiens (Human) protein is Photoreceptor disk component PRCD.